A 744-amino-acid chain; its full sequence is MTIPNTIPITPELIASHGLKPDEYQRILDLIGREPTFTELGIFSAMWNEHCSYKSSKKWLRTLPTKGPRVIQGPGENAGVVDIDDGDCVVFKMESHNHPSYIEPYQGAATGVGGILRDVFTMGARPIAAMNALRFGEPDHPKTRHLVSGVVSGVGGYGNSFGVPTVGGEVEFDARYNGNILVNAFAAGIAKSNAIFLSEAKGVGLPVVYLGAKTGRDGVGGATMASAEFDESIEEKRPTVQVGDPFTEKCLLEACLELMQTGAVIAIQDMGAAGLTCSAVEMGAKGDLGILLELDKVPVREERMTAYEMMLSESQERMLMVLQPEKEEEAKAIFVKWGLDFAIVGWTTDDLRFRVMHQGEEVANLPIKDLGDQAPEYDRPWRESGKRAPLPANLVAAPEDYGQALLQLVGSANQSSRRWVYEQYDTLIQGNSLQLPGGDAGVVRVDGHPSKALAFSSDVTPRYVEADPFEGGKQAVAECWRNITATGAEPLAATDNLNFGNPEKPEIMGQFVEAVKGIGEACRALDFPIVSGNVSLYNETNGVAILPTPTIAGVGLLPDWSKMARIGSANDGDKVIMIGVDGSHLGQSVYLRDVLSSSEGPAPEVDLFAERRNGDFVRSVIRNGQATACHDISSGGLAVALAEMAMASGKGLTIDLSEGKGEPHALLFGEDQARYVLTLPADVADFVCVNAEGGGVPFRRLGTVGGTALVVGDLISLPIQQLRDAHESWFPDFMEGRGELAAAE.

The active site involves His-50. Residues Tyr-53 and Lys-92 each contribute to the ATP site. Glu-94 lines the Mg(2+) pocket. Residues 95 to 98 and Arg-117 each bind substrate; that span reads SHNH. His-96 acts as the Proton acceptor in catalysis. Mg(2+) is bound at residue Asp-118. Residue Gln-241 participates in substrate binding. Asp-269 lines the Mg(2+) pocket. Residue 313–315 coordinates substrate; it reads ESQ. Positions 495 and 532 each coordinate ATP. Asn-533 is a Mg(2+) binding site. A substrate-binding site is contributed by Ser-535.

This sequence belongs to the FGAMS family. As to quaternary structure, monomer. Part of the FGAM synthase complex composed of 1 PurL, 1 PurQ and 2 PurS subunits.

It localises to the cytoplasm. The catalysed reaction is N(2)-formyl-N(1)-(5-phospho-beta-D-ribosyl)glycinamide + L-glutamine + ATP + H2O = 2-formamido-N(1)-(5-O-phospho-beta-D-ribosyl)acetamidine + L-glutamate + ADP + phosphate + H(+). Its pathway is purine metabolism; IMP biosynthesis via de novo pathway; 5-amino-1-(5-phospho-D-ribosyl)imidazole from N(2)-formyl-N(1)-(5-phospho-D-ribosyl)glycinamide: step 1/2. Its function is as follows. Part of the phosphoribosylformylglycinamidine synthase complex involved in the purines biosynthetic pathway. Catalyzes the ATP-dependent conversion of formylglycinamide ribonucleotide (FGAR) and glutamine to yield formylglycinamidine ribonucleotide (FGAM) and glutamate. The FGAM synthase complex is composed of three subunits. PurQ produces an ammonia molecule by converting glutamine to glutamate. PurL transfers the ammonia molecule to FGAR to form FGAM in an ATP-dependent manner. PurS interacts with PurQ and PurL and is thought to assist in the transfer of the ammonia molecule from PurQ to PurL. This Rhizobium johnstonii (strain DSM 114642 / LMG 32736 / 3841) (Rhizobium leguminosarum bv. viciae) protein is Phosphoribosylformylglycinamidine synthase subunit PurL.